The primary structure comprises 238 residues: Cysteine-rich venom protein pseudechetoxin-like (238 aa).

The signal sequence occupies residues 1–19 (MIAFIVLLSLAAVLQQSSG). Positions 20 to 28 (TVDFASESS) are excised as a propeptide. The 127-residue stretch at 38 to 164 (VDKHNALRRS…STKYLYVCQY (127 aa)) folds into the SCP domain. Cystine bridges form between C75–C153, C92–C165, C148–C162, C184–C191, C187–C196, C200–C233, C209–C227, and C218–C231. A ShKT domain is found at 200–233 (CKHEDDFSNCKALAKNSKCQTAWIKSKCPATCFC).

Belongs to the CRISP family. As to expression, expressed by the venom gland.

The protein localises to the secreted. Functionally, blocks olfactory (CNGA2) and retinal (CNGA1) CNG channel currents. Does not affect neither depolarization- nor caffeine-induced contraction of smooth muscle. This chain is Cysteine-rich venom protein pseudechetoxin-like, found in Hoplocephalus stephensii (Stephens's banded snake).